Reading from the N-terminus, the 354-residue chain is DNA replication and repair protein RecF (354 aa).

30 to 37 (GDNGSGKT) contributes to the ATP binding site.

It belongs to the RecF family.

The protein localises to the cytoplasm. Its function is as follows. The RecF protein is involved in DNA metabolism; it is required for DNA replication and normal SOS inducibility. RecF binds preferentially to single-stranded, linear DNA. It also seems to bind ATP. The protein is DNA replication and repair protein RecF of Idiomarina loihiensis (strain ATCC BAA-735 / DSM 15497 / L2-TR).